The chain runs to 321 residues: Probable arabinan endo-1,5-alpha-L-arabinosidase C (321 aa).

The signal sequence occupies residues 1–20 (MYLYTLILLFLASVNVNAYA). Catalysis depends on D33, which acts as the Proton acceptor. N75 and N192 each carry an N-linked (GlcNAc...) asparagine glycan. E200 acts as the Proton donor in catalysis. N224 carries N-linked (GlcNAc...) asparagine glycosylation.

Belongs to the glycosyl hydrolase 43 family.

It is found in the secreted. The enzyme catalyses Endohydrolysis of (1-&gt;5)-alpha-arabinofuranosidic linkages in (1-&gt;5)-arabinans.. It participates in glycan metabolism; L-arabinan degradation. Functionally, endo-1,5-alpha-L-arabinanase involved in degradation of pectin. Its preferred substrate is linear 1,5-alpha-L-arabinan. This Neosartorya fischeri (strain ATCC 1020 / DSM 3700 / CBS 544.65 / FGSC A1164 / JCM 1740 / NRRL 181 / WB 181) (Aspergillus fischerianus) protein is Probable arabinan endo-1,5-alpha-L-arabinosidase C (abnC).